The primary structure comprises 706 residues: Dihydroxyacetone synthase (706 aa).

Thiamine diphosphate-binding positions include H76 and 126 to 128 (GPL). Mg(2+) is bound by residues D167, N197, and V199. N197 is a binding site for thiamine diphosphate. H273, E431, and F459 together coordinate thiamine diphosphate. E431 serves as the catalytic Proton donor. The Microbody targeting signal motif lies at 704-706 (NHL).

Belongs to the transketolase family. Requires Mg(2+) as cofactor. Ca(2+) serves as cofactor. The cofactor is Mn(2+). Co(2+) is required as a cofactor. It depends on thiamine diphosphate as a cofactor.

It localises to the peroxisome. The enzyme catalyses D-xylulose 5-phosphate + formaldehyde = dihydroxyacetone + D-glyceraldehyde 3-phosphate. Involved in assimilation of formaldehyde. The chain is Dihydroxyacetone synthase (DAS1) from Candida boidinii (Yeast).